The sequence spans 221 residues: NIP3 homolog (221 aa).

Residues 24-55 (GEKTDESVQPQQQTEQSSAQQTTPSAKAVSNP) form a disordered region. A Glycyl lysine isopeptide (Lys-Gly) (interchain with G-Cter in ubiquitin) cross-link involves residue Lys-26. Low complexity predominate over residues 32–49 (QPQQQTEQSSAQQTTPSA). A helical membrane pass occupies residues 189-209 (VVFGFLVTNIFSFVVGAAVGF). The segment at 189–209 (VVFGFLVTNIFSFVVGAAVGF) is required for initiation of apoptosis.

This sequence belongs to the NIP3 family. As to quaternary structure, homodimer; via transmembrane domain. Interacts with ced-3 and ced-9. In terms of processing, ubiquitinated and degraded by the proteasome. Under oxidative stress conditions, ubiquitinated at Lys-26 in a pink-1 dependent manner. Colocalizes with pdr-1 and may be ubiquitinated by it. Expressed in all somatic tissues including neurons, pharynx, intestine, body wall muscles and vulva muscles.

It localises to the mitochondrion outer membrane. Initiates apoptosis in a BH3-independent mechanism possibly by recruiting ced-3 to mitochondria and other cytoplasmic membranes. Has a role in lifespan and tumor growth. Required for the induction of mitophagy under stress conditions. This Caenorhabditis elegans protein is NIP3 homolog.